Reading from the N-terminus, the 298-residue chain is Release factor glutamine methyltransferase (298 aa).

S-adenosyl-L-methionine contacts are provided by residues 131-135 (GTGTG), aspartate 162, tryptophan 189, and asparagine 205. 205 to 208 (NPPY) serves as a coordination point for substrate.

Belongs to the protein N5-glutamine methyltransferase family. PrmC subfamily.

It catalyses the reaction L-glutaminyl-[peptide chain release factor] + S-adenosyl-L-methionine = N(5)-methyl-L-glutaminyl-[peptide chain release factor] + S-adenosyl-L-homocysteine + H(+). Methylates the class 1 translation termination release factors RF1/PrfA and RF2/PrfB on the glutamine residue of the universally conserved GGQ motif. In Pasteurella multocida (strain Pm70), this protein is Release factor glutamine methyltransferase.